A 445-amino-acid polypeptide reads, in one-letter code: Glucose-6-phosphate isomerase 2 (445 aa).

The active-site Proton donor is the glutamate 285. Active-site residues include histidine 306 and lysine 420.

This sequence belongs to the GPI family. In terms of assembly, homodimer.

It is found in the cytoplasm. The enzyme catalyses alpha-D-glucose 6-phosphate = beta-D-fructose 6-phosphate. The protein operates within carbohydrate biosynthesis; gluconeogenesis. Its pathway is carbohydrate degradation; glycolysis; D-glyceraldehyde 3-phosphate and glycerone phosphate from D-glucose: step 2/4. In terms of biological role, catalyzes the reversible isomerization of glucose-6-phosphate to fructose-6-phosphate. This chain is Glucose-6-phosphate isomerase 2, found in Geobacillus stearothermophilus (Bacillus stearothermophilus).